Reading from the N-terminus, the 611-residue chain is uncharacterized protein (611 aa).

Belongs to the metallo-dependent hydrolases superfamily. N-acyl-D-amino-acid deacylase family.

This is an uncharacterized protein from Mycobacterium bovis (strain ATCC BAA-935 / AF2122/97).